We begin with the raw amino-acid sequence, 201 residues long: MEDVLDLGEAPSRRTGVKMGRRARAAQETQQETADVSRNQTGREGPPKPLRQGGWADDSSGPSKSTRRMTDDVEDSRLKQQSLDESDEGEDIPVIPDLEDVQEEDLALQVASPPSVQVNRVMTYRDLDNDLMRHAAFQSLDGDVDLKLLTKVLSPEPEVREENVRWDWDLLFTEVSSELITEWDVGKMEKEDMLKPSPLVS.

The segment at Met1–Glu104 is disordered. Residues Thr15 to Arg24 show a composition bias toward basic residues. Residues Arg68 to Leu78 are compositionally biased toward basic and acidic residues. Residues Asp84–Glu104 are compositionally biased toward acidic residues.

This sequence belongs to the IFT43 family. Component of the IFT complex A (IFT-A) complex.

Its subcellular location is the cytoplasm. The protein localises to the cytoskeleton. It is found in the cell projection. The protein resides in the cilium. Functionally, as a component of IFT complex A (IFT-A), a complex required for retrograde ciliary transport and entry into cilia of G protein-coupled receptors (GPCRs), it is involved in ciliogenesis. Involved in retrograde ciliary transport along microtubules from the ciliary tip to the base. This chain is Intraflagellar transport protein 43 homolog (ift43), found in Xenopus laevis (African clawed frog).